Reading from the N-terminus, the 1530-residue chain is MNQNSDTTHGQALGSTLNHTTEVTRISNSSDHFEDSSSNVDESLDSSNPSSNEKASHTNEEYRSKGNQSYVPSSSNEPSPESSSNSDSSSSDDSSVDRLAGDPFELGENFNLKHYLRAYKDSLQRDDIITRSSGVCMRDHSVYGVGSGYEFLKTFPDIFLQPYRAITEKQVVEKAILSHCHALANAGELVMVLGQPGSGCSTFLRSVTSDTVHYKRVEGTTHYDGIDKADMKKFFPGDLLYSGENDVHFPSLTTAETLDFAAKCRTPNNRPCNLTRQEYVSRERHLIATAFGLTHTFNTKVGNDFVRGVSGGERKRVTISEGFATRPTIACWDNSTRGLDSSTAFEFVNVLRTCANELKMTSFVTAYQASEKIYKLFDRICVLYAGRQIYYGPADKAKQYFLDMGFDCHPRETTPDFLTAISDPKARFPRKGFENRVPRTPDEFEQMWRNSSVYADLMAEMESYDKRWTETTPASSEAPEKDNFGSDISATTKHELYRQSAVAEKSKRVKDTSPYTVTFSQQLWYCLARSWERYINDPAYIGSMAFAFLFQSLIIGSIFYDMKLNTVDVFSRGGVLFFSILFCALQSLSEIANMFSQRPIIAKHRASALYHPAADVISSLIVDLPFRFINISVFSIVLYFLTNLKRTAGGFWTYFLFLFIGATCMSAFFRSLAGIMPNVESASALGGIGVLAIAIYTGYAIPNIDVGWWFRWIAYLDPLQFGFESLMINEFKARQFECSQLIPYGSGYDNYPVANKICPVTSAEPGTDYVDGSTYLYISFNYKTRQLWRNLAIIIGYYAFLVFVNIVASETLNFNDLKGEYLVFRRGHAPDAVKAAVNEGGKPLDLETGQDTQGGDVVKESPDNEEELNKEYEGIEKGHDIFSWRNLNYDIQIKGEHRRLLNGVQGFVVPGKLTALMGESGAGKTTLLNVLAQRVDTGVVTGDMLVNGRGLDSTFQRRTGYVQQQDVHIGESTVREALRFSAALRQPASVPLSEKYEYVESVIKLLEMESYAEAIIGTPGSGLNVEQRKRATIGVELAAKPALLLFLDEPTSGLDSQSAWSIVCFLRKLADAGQAILCTIHQPSAVLFDQFDRLLLLQKGGKTVYFGDIGEHSKTLLNYFESHGAVHCPDDGNPAEYILDVIGAGATATTNRDWHEVWNNSEERKAISAELDKINASFSNSEDKKTLSKEDRSTYAMPLWFQVKMVMTRNFQSYWREPSILMSKLALDIFAGLFIGFTFYNQGLGVQNIQNKLFAVFMATVLAVPLINGLQPKFIELRNVFEVREKPSNIYSWVAFVFSAIIVEIPFNLVFGTLFFLCWFYPIKFYKHIHHPGDKTGYAWLLYMFFQMYFSTFGQAVASACPNAQTASVVNSLLFTFVITFNGVLQPNSNLVGFWHWMHSLTPFTYLIEGLLSDLVHGLPVECKSHEMLTINPPSGQTCGEYMSAFLTNNTAAGNLLNPNATTSCSYCPYQTADQFLERFSMRYTHRWRNLGIFVGYVFFNIFAVLLLFYVFRVMKLRSTWLGKKITGTG.

Residues Met-1–Ile-26 show a composition bias toward polar residues. The tract at residues Met-1–Ala-100 is disordered. The N-linked (GlcNAc...) asparagine glycan is linked to Asn-28. Residues Ser-36–Asn-48 show a composition bias toward low complexity. Positions Lys-54–Ser-64 are enriched in basic and acidic residues. An N-linked (GlcNAc...) asparagine glycan is attached at Asn-67. Residues Pro-72 to Asp-93 are compositionally biased toward low complexity. The ABC transporter 1 domain maps to Lys-153–Pro-410. N-linked (GlcNAc...) asparagine glycosylation is found at Asn-273, Asn-334, and Asn-450. Phosphoserine is present on residues Ser-486 and Ser-489. Position 491 is a phosphothreonine (Thr-491). 6 consecutive transmembrane segments (helical) span residues Ala-539–Phe-559, Val-575–Phe-595, Leu-620–Phe-640, Gly-649–Phe-669, Ala-684–Ile-704, and Leu-791–Thr-811. Positions Pro-843–Asn-864 are disordered. In terms of domain architecture, ABC transporter 2 spans Phe-882–Ala-1125. Gly-918–Thr-925 contributes to the ATP binding site. Residues Asn-1159 and Asn-1175 are each glycosylated (N-linked (GlcNAc...) asparagine). At Thr-1186 the chain carries Phosphothreonine. Transmembrane regions (helical) follow at residues Ile-1220–Tyr-1240, Ala-1255–Ile-1275, Ala-1300–Phe-1320, Tyr-1338–Ala-1358, Ala-1367–Pro-1387, and Val-1392–Leu-1412. N-linked (GlcNAc...) asparagine glycans are attached at residues Asn-1449 and Asn-1460. Residues Gly-1492–Phe-1512 traverse the membrane as a helical segment.

This sequence belongs to the ABC transporter superfamily. ABCG family. PDR (TC 3.A.1.205) subfamily.

Its subcellular location is the membrane. Functionally, confers hyper-resistance to brefeldin A (BFA), an inhibitor of intracellular protein transport. Could serve as an efflux pump of various antibiotics. This Schizosaccharomyces pombe (strain 972 / ATCC 24843) (Fission yeast) protein is Brefeldin A resistance protein (bfr1).